The chain runs to 137 residues: Small ribosomal subunit protein uS12 (137 aa).

The segment at 1–43 (MPTINQLVRKGRVSKTKKSDSPALNKGYNSFKKRMTDQNAPQK) is disordered.

The protein belongs to the universal ribosomal protein uS12 family. As to quaternary structure, part of the 30S ribosomal subunit. Contacts proteins S8 and S17. May interact with IF1 in the 30S initiation complex.

With S4 and S5 plays an important role in translational accuracy. In terms of biological role, interacts with and stabilizes bases of the 16S rRNA that are involved in tRNA selection in the A site and with the mRNA backbone. Located at the interface of the 30S and 50S subunits, it traverses the body of the 30S subunit contacting proteins on the other side and probably holding the rRNA structure together. The combined cluster of proteins S8, S12 and S17 appears to hold together the shoulder and platform of the 30S subunit. The polypeptide is Small ribosomal subunit protein uS12 (Oceanobacillus iheyensis (strain DSM 14371 / CIP 107618 / JCM 11309 / KCTC 3954 / HTE831)).